The following is a 457-amino-acid chain: Phosphomethylpyrimidine synthase (457 aa).

Residues asparagine 80, methionine 109, tyrosine 139, histidine 175, 195-197 (SRG), 236-239 (DSLR), and glutamate 275 each bind substrate. Residue histidine 279 coordinates Zn(2+). Tyrosine 302 is a binding site for substrate. Histidine 343 lines the Zn(2+) pocket. Positions 423, 426, and 431 each coordinate [4Fe-4S] cluster.

It belongs to the ThiC family. It depends on [4Fe-4S] cluster as a cofactor.

The enzyme catalyses 5-amino-1-(5-phospho-beta-D-ribosyl)imidazole + S-adenosyl-L-methionine = 4-amino-2-methyl-5-(phosphooxymethyl)pyrimidine + CO + 5'-deoxyadenosine + formate + L-methionine + 3 H(+). It participates in cofactor biosynthesis; thiamine diphosphate biosynthesis. Functionally, catalyzes the synthesis of the hydroxymethylpyrimidine phosphate (HMP-P) moiety of thiamine from aminoimidazole ribotide (AIR) in a radical S-adenosyl-L-methionine (SAM)-dependent reaction. This is Phosphomethylpyrimidine synthase from Trichormus variabilis (strain ATCC 29413 / PCC 7937) (Anabaena variabilis).